We begin with the raw amino-acid sequence, 460 residues long: Bifunctional beta-D-glucosidase/beta-D-fucosidase (460 aa).

The active-site Proton donor is the Glu-168. Glu-362 (nucleophile) is an active-site residue.

Belongs to the glycosyl hydrolase 1 family. In terms of assembly, monomer.

The protein localises to the secreted. It carries out the reaction Hydrolysis of terminal, non-reducing beta-D-glucosyl residues with release of beta-D-glucose.. It catalyses the reaction Hydrolysis of terminal non-reducing beta-D-fucose residues in beta-D-fucosides.. Its activity is regulated as follows. Inhibited by Cu(2+), Ag(+) and Hg(+), but not by other cations such as Mg(2+), Ca(2+), Mn(2+) and Co(2+). Inhibited by 1-amino-1-deoxy-D-glucose and p-chloromercuribenzoic acid, but not by EDTA or dithiothreitol. Inhibited by the disaccharides sucrose, lactose and cellobiose. The monosaccharides D-fructose, D-mannose, D-xylose and D-glucose increase the beta-D-fucosidase activity, but not the beta-D-glucosidase activity. D-glucose inhibits the beta-D-glucosidase activity, but promotes the beta-D-fucosidase activity. D-fucose inhibits the beta-D-glucosidase activity and does not significantly affect the beta-D-fucosidase activity. Bifunctional beta-D-glucosidase/beta-D-fucosidase. Activity towards pNP-beta-D-fucoside is about 80-85% of the activity towards pNP-beta-D-glucoside. Also has slight activity (less than 10%) towards pNP-beta-D-galactoside, and very low activity (less than 1%) towards pNP-beta-D-xyloside. Hydrolyzes laminaribiose, sophorose, cellobiose and gentobiose. Not active against maltose, pNP-alpha-D-glucoside or pNP-beta-L-fucoside. The sequence is that of Bifunctional beta-D-glucosidase/beta-D-fucosidase from Bifidobacterium breve.